A 419-amino-acid polypeptide reads, in one-letter code: MQKLIIYGGKPLRGSINISGAKNAVLPIMAASILTDKLHITNVPKLTDVSTMKGLLRSHGADIETIEHQDEFELIINTRNINNFTADYDIVRKMRASIWVLGPLLTKYGKAKVSLPGGCAIGARQVDLHIAVLKAMGAMIEIEGGYINASSKGRLKGTHFIFDKVSVGATINAILAAVLAEGETLLFNCGREPEIVDLCNCLIKMGADIIGVGTSEITIKGKDALNKVSYKVLSDRIEAGTYMLAAAITKGDVKICGIDYHIIENLALKLIETGIKVVPIDNGVQVIYEGKLNAVNLETNPYPGFATDLQAQFMSLMTLSSGVSMITENIFENRFMHVPELCRMGADILVRGNKAIVRGVEMLKGAEVMASDLRASVSLILAGLSTNSKTVLHRIYHLDRGFQDLEKKLSNCGADIKRV.

22–23 serves as a coordination point for phosphoenolpyruvate; sequence KN. UDP-N-acetyl-alpha-D-glucosamine is bound at residue Arg-95. The active-site Proton donor is the Cys-119. Cys-119 is modified (2-(S-cysteinyl)pyruvic acid O-phosphothioketal). UDP-N-acetyl-alpha-D-glucosamine is bound by residues 164 to 167, Asp-308, and Ile-330; that span reads KVSV.

It belongs to the EPSP synthase family. MurA subfamily.

Its subcellular location is the cytoplasm. It carries out the reaction phosphoenolpyruvate + UDP-N-acetyl-alpha-D-glucosamine = UDP-N-acetyl-3-O-(1-carboxyvinyl)-alpha-D-glucosamine + phosphate. The protein operates within cell wall biogenesis; peptidoglycan biosynthesis. Cell wall formation. Adds enolpyruvyl to UDP-N-acetylglucosamine. The protein is UDP-N-acetylglucosamine 1-carboxyvinyltransferase of Rickettsia canadensis (strain McKiel).